A 589-amino-acid polypeptide reads, in one-letter code: Transmembrane 9 superfamily member 1 (589 aa).

The N-terminal stretch at 1–27 is a signal peptide; it reads MTVLGHPRSWSCHCLPVLILLLGIGHG. Asn-178 carries N-linked (GlcNAc...) asparagine glycosylation. The next 4 membrane-spanning stretches (helical) occupy residues 237–257, 310–330, 339–359, and 373–393; these read LSII…AVIL, VLGV…MALL, GAIN…SGYV, and VWNI…TWSV. Residue Asn-401 is glycosylated (N-linked (GlcNAc...) asparagine). Helical transmembrane passes span 412–432, 482–502, and 518–538; these read ILLL…IGGI, GILF…SIAL, and SVLS…FYYA. An N-linked (GlcNAc...) asparagine glycan is attached at Asn-542. The chain crosses the membrane as a helical span at residues 552-572; the sequence is FFGYSLLTGYVFFLMLGTISF.

This sequence belongs to the nonaspanin (TM9SF) (TC 9.A.2) family.

It localises to the lysosome membrane. Its subcellular location is the cytoplasmic vesicle. The protein localises to the autophagosome membrane. In terms of biological role, plays an essential role in autophagy. The chain is Transmembrane 9 superfamily member 1 (Tm9sf1) from Rattus norvegicus (Rat).